Reading from the N-terminus, the 357-residue chain is Eukaryotic translation initiation factor 3 subunit H (357 aa).

The MPN domain occupies Val-20–Phe-162.

Belongs to the eIF-3 subunit H family. In terms of assembly, component of the eukaryotic translation initiation factor 3 (eIF-3) complex. The eIF-3 complex appears to include tif32/eif3a, SPAC25G10.08/eif3b, tif33/eif3c, SPBC4C3.07/eif3f, tif35/eif3g and sum1/eif3i. This set of common subunits may also associate exclusively with either moe1/eif3d and int6/eif3e, or with SPAC821.05/eif3h and SPAC1751.03/eif3m. The eIF-3 complex may also include SPAC3A12.13c/eif3j.

The protein resides in the cytoplasm. It is found in the nucleus. Component of the eukaryotic translation initiation factor 3 (eIF-3) complex, which is involved in protein synthesis of a specialized repertoire of mRNAs and, together with other initiation factors, stimulates binding of mRNA and methionyl-tRNAi to the 40S ribosome. The eIF-3 complex specifically targets and initiates translation of a subset of mRNAs involved in cell proliferation. This Schizosaccharomyces pombe (strain 972 / ATCC 24843) (Fission yeast) protein is Eukaryotic translation initiation factor 3 subunit H (eif3h).